Consider the following 154-residue polypeptide: Nuclear cap-binding protein subunit 2 (154 aa).

Residues tyrosine 10, tyrosine 33, 102-106 (RVDWD), 113-117 (RQYGR), and 123-124 (QV) contribute to the mRNA site. The RRM domain maps to 30–108 (CTLYVGNLSF…RLIRVDWDAG (79 aa)).

This sequence belongs to the RRM NCBP2 family. In terms of assembly, component of the nuclear cap-binding complex (CBC), a heterodimer composed of Cbp80 and Cbp20 that interacts with m7GpppG-capped RNA. Interacts with Ars2.

The protein localises to the nucleus. Component of the cap-binding complex (CBC), which binds co-transcriptionally to the 5' cap of pre-mRNAs and is involved in various processes such as pre-mRNA splicing and RNA-mediated gene silencing (RNAi). The CBC complex is involved in miRNA-mediated RNA interference via its interaction with Ars2 and is required for primary microRNAs (miRNAs) processing. Also involved in innate immunity via the short interfering RNAs (siRNAs) processing machinery by restricting the viral RNA production. In the CBC complex, Cbp20 recognizes and binds capped RNAs (m7GpppG-capped RNA) but requires Cbp80 to stabilize the movement of its N-terminal loop and lock the CBC into a high affinity cap-binding state with the cap structure. This is Nuclear cap-binding protein subunit 2 (Cbp20) from Drosophila yakuba (Fruit fly).